Consider the following 155-residue polypeptide: Putative ATP synthase protein YMF19-like protein (155 aa).

A run of 3 helical transmembrane segments spans residues 23 to 43 (FLWL…VLVF), 89 to 109 (WRAL…LGSF), and 117 to 137 (VDFG…LFFF).

The protein belongs to the ATPase protein YMF19 family.

The protein resides in the mitochondrion membrane. The chain is Putative ATP synthase protein YMF19-like protein (YMF18) from Marchantia polymorpha (Common liverwort).